A 504-amino-acid chain; its full sequence is 2,3-bisphosphoglycerate-independent phosphoglycerate mutase (504 aa).

Mn(2+) is bound by residues Asp-13 and Ser-63. The active-site Phosphoserine intermediate is Ser-63. Substrate-binding positions include His-124, 153 to 154 (RD), Arg-183, Arg-189, 254 to 257 (RADR), and Lys-330. Mn(2+) contacts are provided by Asp-397, His-401, Asp-438, His-439, and His-457.

The protein belongs to the BPG-independent phosphoglycerate mutase family. As to quaternary structure, monomer. It depends on Mn(2+) as a cofactor.

The catalysed reaction is (2R)-2-phosphoglycerate = (2R)-3-phosphoglycerate. The protein operates within carbohydrate degradation; glycolysis; pyruvate from D-glyceraldehyde 3-phosphate: step 3/5. Its function is as follows. Catalyzes the interconversion of 2-phosphoglycerate and 3-phosphoglycerate. The sequence is that of 2,3-bisphosphoglycerate-independent phosphoglycerate mutase from Rhodopseudomonas palustris (strain ATCC BAA-98 / CGA009).